The sequence spans 193 residues: Flagellar transcriptional regulator FlhC (193 aa).

Residues Cys-138, Cys-141, Cys-158, and Cys-161 each coordinate Zn(2+).

Belongs to the FlhC family. As to quaternary structure, heterohexamer composed of two FlhC and four FlhD subunits. Each FlhC binds a FlhD dimer, forming a heterotrimer, and a hexamer assembles by dimerization of two heterotrimers. Zn(2+) serves as cofactor.

The protein resides in the cytoplasm. Functions in complex with FlhD as a master transcriptional regulator that regulates transcription of several flagellar and non-flagellar operons by binding to their promoter region. Activates expression of class 2 flagellar genes, including fliA, which is a flagellum-specific sigma factor that turns on the class 3 genes. Also regulates genes whose products function in a variety of physiological pathways. This is Flagellar transcriptional regulator FlhC from Proteus mirabilis.